We begin with the raw amino-acid sequence, 512 residues long: Methionine--tRNA ligase (512 aa).

The 'HIGH' region motif lies at 11–21; that stretch reads YYASGKPHIGH. Residues Cys126, Cys129, Cys143, and His147 each coordinate Zn(2+). The 'KMSKS' region signature appears at 301–305; sequence KMSKS. Lys304 contributes to the ATP binding site.

Belongs to the class-I aminoacyl-tRNA synthetase family. MetG type 2A subfamily. As to quaternary structure, monomer. Zn(2+) serves as cofactor.

The protein localises to the cytoplasm. It carries out the reaction tRNA(Met) + L-methionine + ATP = L-methionyl-tRNA(Met) + AMP + diphosphate. In terms of biological role, is required not only for elongation of protein synthesis but also for the initiation of all mRNA translation through initiator tRNA(fMet) aminoacylation. In Mycoplasma genitalium (strain ATCC 33530 / DSM 19775 / NCTC 10195 / G37) (Mycoplasmoides genitalium), this protein is Methionine--tRNA ligase (metG).